A 364-amino-acid chain; its full sequence is MSNDLKKTPLYDRFVESNAKIVEFGGWAMPVQFSSIKEEHNAVREVMGIFDVSHMGEVLIEGKDASDFIQYILSNDTDQLTDNKAQYTALCNDKGGIIDDLITYKLDNQKYLLVVNAANTEKDYNWINSHSENFDVKVENVSDQYGQLAVQGPEARDYVGSLVDVDVSEMKPFDFKKDVTIFGKNIILSQSGYTGEDGFEIYCNSDDVVDIWDGLLENENLVPAGLGARDTLRLEAGLPLHGQDLSEDITPYEGGIAFAAKPLIEADFIGKEVLKEQKENGSAERTIGLEMLDKGIPRTGYDVLDLDGNKIGVVTSGTQSPATGKGIALAIINRDEFEMGREVLVQIRKRQVKAKIVKKNQISK.

Belongs to the GcvT family. The glycine cleavage system is composed of four proteins: P, T, L and H.

The catalysed reaction is N(6)-[(R)-S(8)-aminomethyldihydrolipoyl]-L-lysyl-[protein] + (6S)-5,6,7,8-tetrahydrofolate = N(6)-[(R)-dihydrolipoyl]-L-lysyl-[protein] + (6R)-5,10-methylene-5,6,7,8-tetrahydrofolate + NH4(+). In terms of biological role, the glycine cleavage system catalyzes the degradation of glycine. The sequence is that of Aminomethyltransferase from Staphylococcus carnosus (strain TM300).